The sequence spans 258 residues: UDP-2,3-diacylglucosamine hydrolase (258 aa).

Aspartate 15, histidine 17, aspartate 48, asparagine 88, and histidine 123 together coordinate Mn(2+). 88-89 (NR) lines the substrate pocket. Substrate-binding residues include aspartate 131, serine 169, asparagine 173, lysine 176, and histidine 204. 2 residues coordinate Mn(2+): histidine 204 and histidine 206.

It belongs to the LpxH family. Requires Mn(2+) as cofactor.

The protein resides in the cell inner membrane. The enzyme catalyses UDP-2-N,3-O-bis[(3R)-3-hydroxytetradecanoyl]-alpha-D-glucosamine + H2O = 2-N,3-O-bis[(3R)-3-hydroxytetradecanoyl]-alpha-D-glucosaminyl 1-phosphate + UMP + 2 H(+). It participates in glycolipid biosynthesis; lipid IV(A) biosynthesis; lipid IV(A) from (3R)-3-hydroxytetradecanoyl-[acyl-carrier-protein] and UDP-N-acetyl-alpha-D-glucosamine: step 4/6. Hydrolyzes the pyrophosphate bond of UDP-2,3-diacylglucosamine to yield 2,3-diacylglucosamine 1-phosphate (lipid X) and UMP by catalyzing the attack of water at the alpha-P atom. Involved in the biosynthesis of lipid A, a phosphorylated glycolipid that anchors the lipopolysaccharide to the outer membrane of the cell. This is UDP-2,3-diacylglucosamine hydrolase from Bordetella pertussis (strain Tohama I / ATCC BAA-589 / NCTC 13251).